Reading from the N-terminus, the 193-residue chain is Mediator of RNA polymerase II transcription subunit 30 (193 aa).

The segment at 1 to 20 (MSTPPLAASGMAPGPFAGPQ) is disordered. The residue at position 2 (S2) is an N-acetylserine. Positions 10–20 (GMAPGPFAGPQ) are enriched in low complexity. The stretch at 71 to 93 (YQDRLAKLQDHLRQLSILFRKLR) forms a coiled coil.

It belongs to the Mediator complex subunit 30 family. In terms of assembly, component of the Mediator complex, which is composed of MED1, MED4, MED6, MED7, MED8, MED9, MED10, MED11, MED12, MED13, MED13L, MED14, MED15, MED16, MED17, MED18, MED19, MED20, MED21, MED22, MED23, MED24, MED25, MED26, MED27, MED29, MED30, MED31, CCNC, CDK8 and CDC2L6/CDK11. The MED12, MED13, CCNC and CDK8 subunits form a distinct module termed the CDK8 module. Mediator containing the CDK8 module is less active than Mediator lacking this module in supporting transcriptional activation. Individual preparations of the Mediator complex lacking one or more distinct subunits have been variously termed ARC, CRSP, DRIP, PC2, SMCC and TRAP.

The protein resides in the nucleus. In terms of biological role, component of the Mediator complex, a coactivator involved in the regulated transcription of nearly all RNA polymerase II-dependent genes. Mediator functions as a bridge to convey information from gene-specific regulatory proteins to the basal RNA polymerase II transcription machinery. Mediator is recruited to promoters by direct interactions with regulatory proteins and serves as a scaffold for the assembly of a functional preinitiation complex with RNA polymerase II and the general transcription factors. The sequence is that of Mediator of RNA polymerase II transcription subunit 30 (MED30) from Bos taurus (Bovine).